Reading from the N-terminus, the 51-residue chain is Large ribosomal subunit protein bL33 (51 aa).

The protein belongs to the bacterial ribosomal protein bL33 family.

The chain is Large ribosomal subunit protein bL33 from Psychrobacter arcticus (strain DSM 17307 / VKM B-2377 / 273-4).